Here is a 152-residue protein sequence, read N- to C-terminus: Nucleoside diphosphate kinase (152 aa).

Positions 9, 57, 85, 91, 102, and 112 each coordinate ATP. The active-site Pros-phosphohistidine intermediate is the H115.

It belongs to the NDK family. Homotetramer. Mg(2+) is required as a cofactor.

It localises to the cytoplasm. It catalyses the reaction a 2'-deoxyribonucleoside 5'-diphosphate + ATP = a 2'-deoxyribonucleoside 5'-triphosphate + ADP. The catalysed reaction is a ribonucleoside 5'-diphosphate + ATP = a ribonucleoside 5'-triphosphate + ADP. Its function is as follows. Major role in the synthesis of nucleoside triphosphates other than ATP. The ATP gamma phosphate is transferred to the NDP beta phosphate via a ping-pong mechanism, using a phosphorylated active-site intermediate. The chain is Nucleoside diphosphate kinase from Rhodopirellula baltica (strain DSM 10527 / NCIMB 13988 / SH1).